Reading from the N-terminus, the 116-residue chain is Somatostatin (116 aa).

The N-terminal stretch at 1-24 is a signal peptide; the sequence is MLSCRLQCALAALSIVLALGGVTC. The propeptide occupies 25–88; sequence APSDPRLRQF…QDEMRLELQR (64 aa). Ala-43 bears the Alanine amide mark. The segment at 62–99 is disordered; it reads QTENDALEPEDLSQAAEQDEMRLELQRSANSNPAMAPR. Cys-105 and Cys-116 are joined by a disulfide.

This sequence belongs to the somatostatin family. In terms of processing, C-terminal amidation of the neuronostatin peptide is required for its biological activity, including for the regulation of mean arterial pressure.

The protein localises to the secreted. Inhibits the secretion of pituitary hormones, including that of growth hormone/somatotropin (GH1), PRL, ACTH, luteinizing hormone (LH) and TSH. Also impairs ghrelin- and GnRH-stimulated secretion of GH1 and LH; the inhibition of ghrelin-stimulated secretion of GH1 can be further increased by neuronostatin. In terms of biological role, may enhance low-glucose-induced glucagon release by pancreatic alpha cells. This effect may be mediated by binding to GPR107 and PKA activation. May regulate cardiac contractile function. May compromise cardiomyocyte viability. In the central nervous system, may impair memory retention and may affect hippocampal excitability. May also have anxiolytic and anorexigenic effects. May play a role in arterial pressure regulation. May inhibit basal, but not ghrelin- or GnRH-stimulated secretion of GH1 or LH, but does not affect the release of other pituitary hormones, including PRL, ACTH, FSH or TSH. Potentiates inhibitory action of somatostatin on ghrelin-stimulated secretion of GH1, but not that on GnRH-stimulated secretion of LH. The sequence is that of Somatostatin (SST) from Canis lupus familiaris (Dog).